The primary structure comprises 90 residues: MEIKNKTRIGHVISDKMEKTIVVGIDVVKRHPLYKKTYRRTMKYLVHDEKNEAKIGDMIEIVECRPISKGKYWRLSKIITKGHIVAAQEA.

Belongs to the universal ribosomal protein uS17 family. Part of the 30S ribosomal subunit.

One of the primary rRNA binding proteins, it binds specifically to the 5'-end of 16S ribosomal RNA. This is Small ribosomal subunit protein uS17 from Dehalococcoides mccartyi (strain ATCC BAA-2100 / JCM 16839 / KCTC 5957 / BAV1).